Here is a 258-residue protein sequence, read N- to C-terminus: Neurotrophin-3 (258 aa).

An N-terminal signal peptide occupies residues 1 to 18 (MSILFYVIFLAYLRGIQG). The propeptide occupies 19-139 (NSMDQRSLPE…ANRTSPRRKR (121 aa)). The segment at 60 to 85 (QSTLPKAEAPREPEQGEATRSEFQPM) is disordered. Over residues 67 to 79 (EAPREPEQGEATR) the composition is skewed to basic and acidic residues. Asn131 carries N-linked (GlcNAc...) asparagine glycosylation. 3 disulfides stabilise this stretch: Cys153/Cys218, Cys196/Cys247, and Cys206/Cys249.

This sequence belongs to the NGF-beta family. As to expression, brain and peripheral tissues.

It is found in the secreted. Seems to promote the survival of visceral and proprioceptive sensory neurons. This Mus musculus (Mouse) protein is Neurotrophin-3 (Ntf3).